The sequence spans 471 residues: Putative multidrug resistance protein MdtD (471 aa).

The next 13 helical transmembrane spans lie at 12–32, 49–69, 77–97, 102–124, 138–158, 165–185, 195–215, 220–240, 263–283, 286–306, 329–351, 393–413, and 431–451; these read LWIV…VNTA, MIIV…GWLA, IFFT…QAST, VMAR…LTVM, FVTL…GVLV, WIFL…LCLM, FDLS…LALD, LGIS…ALLL, FSLG…LPFM, VFLQ…MIPM, VLVA…ALAG, LLSM…GLLL, and VFLY…LIFS.

It belongs to the major facilitator superfamily. TCR/Tet family.

It localises to the cell inner membrane. The polypeptide is Putative multidrug resistance protein MdtD (Klebsiella pneumoniae subsp. pneumoniae (strain ATCC 700721 / MGH 78578)).